The chain runs to 665 residues: Potassium-transporting ATPase ATP-binding subunit (665 aa).

The next 4 membrane-spanning stretches (helical) occupy residues 28 to 48, 56 to 76, 207 to 227, and 244 to 264; these read MFLT…PGFF, YLQF…FSSM, IALT…TASI, and IVLL…AIGI. Residue aspartate 295 is the 4-aspartylphosphate intermediate of the active site. ATP-binding positions include aspartate 332, glutamate 336, 364–371, and lysine 382; that span reads FSSETKYS. The Mg(2+) site is built by aspartate 501 and aspartate 505. 3 helical membrane-spanning segments follow: residues 570 to 590, 596 to 616, and 644 to 664; these read YFVI…VNVL, IVAV…LIPL, and VVVP…LGVV.

The protein belongs to the cation transport ATPase (P-type) (TC 3.A.3) family. Type IA subfamily. As to quaternary structure, the system is composed of three essential subunits: KdpA, KdpB and KdpC.

Its subcellular location is the cell membrane. It catalyses the reaction K(+)(out) + ATP + H2O = K(+)(in) + ADP + phosphate + H(+). Its function is as follows. Part of the high-affinity ATP-driven potassium transport (or Kdp) system, which catalyzes the hydrolysis of ATP coupled with the electrogenic transport of potassium into the cytoplasm. This subunit is responsible for energy coupling to the transport system and for the release of the potassium ions to the cytoplasm. This chain is Potassium-transporting ATPase ATP-binding subunit, found in Thermoplasma acidophilum (strain ATCC 25905 / DSM 1728 / JCM 9062 / NBRC 15155 / AMRC-C165).